An 860-amino-acid chain; its full sequence is Leucine--tRNA ligase (860 aa).

The 'HIGH' region signature appears at 42-52 (PYPSGRLHMGH). A 'KMSKS' region motif is present at residues 619 to 623 (KMSKS). Residue Lys622 participates in ATP binding.

It belongs to the class-I aminoacyl-tRNA synthetase family.

It localises to the cytoplasm. It catalyses the reaction tRNA(Leu) + L-leucine + ATP = L-leucyl-tRNA(Leu) + AMP + diphosphate. The polypeptide is Leucine--tRNA ligase (Salmonella typhimurium (strain LT2 / SGSC1412 / ATCC 700720)).